We begin with the raw amino-acid sequence, 360 residues long: CLIP domain-containing serine protease B4 (360 aa).

An N-terminal signal peptide occupies residues Met-1–Ala-24. In terms of domain architecture, Clip spans Asp-30 to Cys-83. Cystine bridges form between Cys-31/Cys-82, Cys-41/Cys-72, Cys-47/Cys-83, and Cys-138/Cys-154. Positions Val-108 to Tyr-360 constitute a Peptidase S1 domain. Active-site charge relay system residues include His-153 and Asp-213. N-linked (GlcNAc...) asparagine glycosylation is present at Asn-224. 2 cysteine pairs are disulfide-bonded: Cys-280/Cys-297 and Cys-307/Cys-336. Catalysis depends on Ser-311, which acts as the Charge relay system.

Belongs to the peptidase S1 family. CLIP subfamily. As to quaternary structure, interacts with SRPN2 in the hemolymph of immune-challenged female mosquitoes; the interaction results in CLIPB4 inhibition. In terms of tissue distribution, in females, expressed in fat body, cuticle, thorax and ovaries.

The protein localises to the secreted. In terms of biological role, serine protease which plays a role in the innate immune response against protozoan and bacterial pathogens, such as Plasmodium bergei, Staphylococcus aureus, Micrococcus luteus and Escherichia coli, by activating the melanization cascade. Cleaves and activates CLIPB8. In the resistant strain L3-5, involved in the melanization of killed parasite P.berghei ookinetes which results in their clearance. In the susceptible strain G3, appears to be dispensable for ookinete elimination which occurs by lysis. The protein is CLIP domain-containing serine protease B4 of Anopheles gambiae (African malaria mosquito).